Reading from the N-terminus, the 82-residue chain is MVTIRLARHGAKKRPFYQIVVADSRNAATGRFIEKVGFFNPTAKGQEEGLRLDLDRVNHWVGQGASVSDRVAKLVKDAQKAA.

This sequence belongs to the bacterial ribosomal protein bS16 family.

The sequence is that of Small ribosomal subunit protein bS16 from Vibrio parahaemolyticus serotype O3:K6 (strain RIMD 2210633).